A 745-amino-acid polypeptide reads, in one-letter code: Fatty acid oxidation complex subunit alpha (745 aa).

Positions 47 to 209 (VNTLKAKFAE…KMGLVDDVVP (163 aa)) are enoyl-CoA hydratase. The tract at residues 325–745 (RAIHRVGVLG…LDEAAITAHN (421 aa)) is 3-hydroxyacyl-CoA dehydrogenase.

In the N-terminal section; belongs to the enoyl-CoA hydratase/isomerase family. The protein in the central section; belongs to the 3-hydroxyacyl-CoA dehydrogenase family. In terms of assembly, heterotetramer of two alpha chains (FadJ) and two beta chains (FadI).

Its subcellular location is the cytoplasm. The catalysed reaction is a (3S)-3-hydroxyacyl-CoA = a (2E)-enoyl-CoA + H2O. It carries out the reaction a 4-saturated-(3S)-3-hydroxyacyl-CoA = a (3E)-enoyl-CoA + H2O. It catalyses the reaction a (3S)-3-hydroxyacyl-CoA + NAD(+) = a 3-oxoacyl-CoA + NADH + H(+). The enzyme catalyses (3S)-3-hydroxybutanoyl-CoA = (3R)-3-hydroxybutanoyl-CoA. Its pathway is lipid metabolism; fatty acid beta-oxidation. Functionally, catalyzes the formation of a hydroxyacyl-CoA by addition of water on enoyl-CoA. Also exhibits 3-hydroxyacyl-CoA epimerase and 3-hydroxyacyl-CoA dehydrogenase activities. This chain is Fatty acid oxidation complex subunit alpha, found in Yersinia enterocolitica serotype O:8 / biotype 1B (strain NCTC 13174 / 8081).